Reading from the N-terminus, the 478-residue chain is Glycogen synthase (478 aa).

Residue lysine 15 coordinates ADP-alpha-D-glucose.

It belongs to the glycosyltransferase 1 family. Bacterial/plant glycogen synthase subfamily.

It catalyses the reaction [(1-&gt;4)-alpha-D-glucosyl](n) + ADP-alpha-D-glucose = [(1-&gt;4)-alpha-D-glucosyl](n+1) + ADP + H(+). It functions in the pathway glycan biosynthesis; glycogen biosynthesis. Synthesizes alpha-1,4-glucan chains using ADP-glucose. In Bacillus cytotoxicus (strain DSM 22905 / CIP 110041 / 391-98 / NVH 391-98), this protein is Glycogen synthase.